Reading from the N-terminus, the 285-residue chain is Glycine--tRNA ligase alpha subunit (285 aa).

The protein belongs to the class-II aminoacyl-tRNA synthetase family. Tetramer of two alpha and two beta subunits.

The protein resides in the cytoplasm. It catalyses the reaction tRNA(Gly) + glycine + ATP = glycyl-tRNA(Gly) + AMP + diphosphate. The polypeptide is Glycine--tRNA ligase alpha subunit (Thermodesulfovibrio yellowstonii (strain ATCC 51303 / DSM 11347 / YP87)).